The sequence spans 126 residues: Large ribosomal subunit protein mL52 (126 aa).

Residues 1–28 (MLKITKICLASSATSTAQRSIALTAPRA) constitute a mitochondrion transit peptide.

The protein belongs to the mitochondrion-specific ribosomal protein mL52 family. Component of the mitochondrial ribosome large subunit (39S) which comprises a 16S rRNA and about 50 distinct proteins.

The protein resides in the mitochondrion. This chain is Large ribosomal subunit protein mL52 (mRpL52), found in Drosophila melanogaster (Fruit fly).